A 775-amino-acid polypeptide reads, in one-letter code: E3 ubiquitin-protein ligase UHRF1 (775 aa).

Residues 1–77 (MWIQVRTMDG…IVQLLVRQIP (77 aa)) form the Ubiquitin-like domain. Residues 81–128 (PTKDKECGISDADSGCGSGQGESDKNSSCGEGATDVDGQPAGINSENV) are disordered. Tudor-like stretches follow at residues 131-207 (SLYK…LRAR) and 214-283 (DLKV…IEEP). The segment at 293–301 (PQKRQNGPE) is linker. Residues 299–366 (GPECKHCKDN…DWYCPDCRND (68 aa)) form a PHD-type zinc finger. 2 histone H3R2me0 binding regions span residues 333 to 337 (CDECD) and 353 to 355 (PQD). Residues 419 to 582 (GPIPGVPVGT…FLVWRYLLRR (164 aa)) enclose the YDG domain. Positions 445 to 446 (HV) are required to promote base flipping. Residues 463–464 (AG) and Asp469 contribute to the DNA site. Required for formation of a 5-methylcytosine-binding pocket regions lie at residues 466–469 (YEDD) and 478–481 (YTGS). Positions 616-628 (ASKEREKENKTED) are enriched in basic and acidic residues. The disordered stretch occupies residues 616 to 655 (ASKEREKENKTEDELSESPSKGKRKRNSAGSGLSDAKSTP). The RING-type zinc-finger motif lies at 706–745 (CICCQEVVYEPITTECHHNICKGCLDRSFKALVHNCPACR).

The protein resides in the nucleus. It carries out the reaction S-ubiquitinyl-[E2 ubiquitin-conjugating enzyme]-L-cysteine + [acceptor protein]-L-lysine = [E2 ubiquitin-conjugating enzyme]-L-cysteine + N(6)-ubiquitinyl-[acceptor protein]-L-lysine.. Its pathway is protein modification; protein ubiquitination. In terms of biological role, multidomain protein that acts as a key epigenetic regulator by bridging DNA methylation and chromatin modification. Specifically recognizes and binds hemimethylated DNA at replication forks via its YDG domain and recruits dnmt1 methyltransferase to ensure faithful propagation of the DNA methylation patterns through DNA replication. In addition to its role in maintenance of DNA methylation, also plays a key role in chromatin modification: through its tudor-like regions and PHD-type zinc fingers, specifically recognizes and binds histone H3 trimethylated at 'Lys-9' (H3K9me3) and unmethylated at 'Arg-2' (H3R2me0), respectively, and recruits chromatin proteins. Enriched in pericentric heterochromatin where it recruits different chromatin modifiers required for this chromatin replication. Also localizes to euchromatic regions where it negatively regulates transcription possibly by impacting DNA methylation and histone modifications. Has E3 ubiquitin-protein ligase activity by mediating the ubiquitination of target proteins. However, it is still unclear how E3 ubiquitin-protein ligase activity is related to its role in chromatin in vivo. This chain is E3 ubiquitin-protein ligase UHRF1 (uhrf1), found in Xenopus tropicalis (Western clawed frog).